Reading from the N-terminus, the 320-residue chain is Ferrochelatase (320 aa).

Residues histidine 194 and glutamate 275 each contribute to the Fe cation site.

Belongs to the ferrochelatase family.

The protein resides in the cytoplasm. It catalyses the reaction heme b + 2 H(+) = protoporphyrin IX + Fe(2+). It participates in porphyrin-containing compound metabolism; protoheme biosynthesis; protoheme from protoporphyrin-IX: step 1/1. Catalyzes the ferrous insertion into protoporphyrin IX. The sequence is that of Ferrochelatase from Xylella fastidiosa (strain M12).